The chain runs to 347 residues: D-alanine--D-alanine ligase (347 aa).

Residues 131–333 enclose the ATP-grasp domain; sequence KRVLESAGIA…YPELIERLVD (203 aa). Residue 161-216 coordinates ATP; it reads EEKLAYPVFAKPSNMGSSVGISKSENQEELRQALKLAFRYDSRVLVEQGVNAREIE. The Mg(2+) site is built by Asp287, Glu300, and Asn302.

This sequence belongs to the D-alanine--D-alanine ligase family. The cofactor is Mg(2+). Requires Mn(2+) as cofactor.

The protein resides in the cytoplasm. The enzyme catalyses 2 D-alanine + ATP = D-alanyl-D-alanine + ADP + phosphate + H(+). It functions in the pathway cell wall biogenesis; peptidoglycan biosynthesis. Functionally, cell wall formation. This is D-alanine--D-alanine ligase from Streptococcus pneumoniae (strain P1031).